The sequence spans 311 residues: Aspartate carbamoyltransferase catalytic subunit (311 aa).

2 residues coordinate carbamoyl phosphate: Arg55 and Thr56. Lys83 serves as a coordination point for L-aspartate. Positions 105, 133, and 136 each coordinate carbamoyl phosphate. Positions 166 and 220 each coordinate L-aspartate. Carbamoyl phosphate is bound by residues Gly261 and Pro262.

The protein belongs to the aspartate/ornithine carbamoyltransferase superfamily. ATCase family. In terms of assembly, heterododecamer (2C3:3R2) of six catalytic PyrB chains organized as two trimers (C3), and six regulatory PyrI chains organized as three dimers (R2).

The enzyme catalyses carbamoyl phosphate + L-aspartate = N-carbamoyl-L-aspartate + phosphate + H(+). Its pathway is pyrimidine metabolism; UMP biosynthesis via de novo pathway; (S)-dihydroorotate from bicarbonate: step 2/3. In terms of biological role, catalyzes the condensation of carbamoyl phosphate and aspartate to form carbamoyl aspartate and inorganic phosphate, the committed step in the de novo pyrimidine nucleotide biosynthesis pathway. This Chlorobium chlorochromatii (strain CaD3) protein is Aspartate carbamoyltransferase catalytic subunit.